The sequence spans 142 residues: Large ribosomal subunit protein uL13 (142 aa).

The protein belongs to the universal ribosomal protein uL13 family. In terms of assembly, part of the 50S ribosomal subunit.

Its function is as follows. This protein is one of the early assembly proteins of the 50S ribosomal subunit, although it is not seen to bind rRNA by itself. It is important during the early stages of 50S assembly. This is Large ribosomal subunit protein uL13 from Erwinia tasmaniensis (strain DSM 17950 / CFBP 7177 / CIP 109463 / NCPPB 4357 / Et1/99).